We begin with the raw amino-acid sequence, 474 residues long: DNA-binding protein (474 aa).

A disordered region spans residues 1–34; sequence MAGRQREHPTVTPYLQETSPERPPPLPPKKKLRK. Residue tyrosine 142 is modified to Phosphotyrosine; by host. Residues cysteine 231 and histidine 233 each coordinate Zn(2+). The tract at residues 244 to 278 is flexible loop; the sequence is VEVDVGSENGQRALKEQPSKTKVVQNRWGRSVVQI. 6 residues coordinate Zn(2+): cysteine 286, cysteine 302, cysteine 343, cysteine 345, cysteine 397, and cysteine 413. The segment at 460-474 is C-terminal arm, DBP binding; that stretch reads VALPTGHGDAEVEPF.

It belongs to the adenoviridae E2A DNA-binding protein family. As to quaternary structure, homomultimerizes on viral ssDNA bound to pTP. Forms a initiation complex with viral polymerase, pTP and hosts NFIA and POU2F1/OCT1. Interacts with host SRCAP.

The protein resides in the host nucleus. In terms of biological role, plays a role in the elongation phase of viral strand displacement replication by unwinding the template in an ATP-independent fashion, employing its capacity to form multimers. Also enhances the rate of initiation. Released from template upon second strand synthesis. Assembles in complex with viral pTP, viral pol, host NFIA and host POU2F1/OCT1 on viral origin of replication. Covers the whole ssDNA genome during synthesis. The complementary strand synthesis induces its relese from DNA template. May inhibit cellular transcription mediated by the interaction between host SRCAP and CBP. In Homo sapiens (Human), this protein is DNA-binding protein.